Consider the following 322-residue polypeptide: MPRELVNAKITHVSYVDKAANQKQFFIVKSEKQPDFQKEVRILAKEADEQKLVYGIVYEPDTVDAHGDFMTAAEIEKAAHGFLKDARQIDKQHDFQGGVGEVVESYVAPADFEMNGETIKKGSWVLVTKASEEVWEQIKKGEITGYSMAGTAETIEKQEKPVSQEKTDEKGLFNLLKNFFVGKQQQSYEEPVAKAGRKFSASNLQEIKNAHAALGNLLSQVETKEGEEEMTSEEVTKSIQEALEPIKKRLETLEKEEELNKKDKEKEEETEKEGEKLKKAISEAVQPLADRIEAIEKSRGTSKQTEESGSEQVQKSIWSGLF.

Residues 205–286 (QEIKNAHAAL…LKKAISEAVQ (82 aa)) adopt a coiled-coil conformation. Basic and acidic residues-rich tracts occupy residues 254–281 (EKEE…KKAI) and 290–299 (DRIEAIEKSR). Positions 254–322 (EKEEELNKKD…VQKSIWSGLF (69 aa)) are disordered. Positions 310–322 (SEQVQKSIWSGLF) are enriched in polar residues.

This sequence to B.subtilis XkdF.

This is an uncharacterized protein from Bacillus subtilis (strain 168).